The following is a 411-amino-acid chain: Ornithine cyclodeaminase (411 aa).

10 residues coordinate NAD(+): asparagine 236, alanine 237, aspartate 315, threonine 347, methionine 348, leucine 349, histidine 350, aspartate 368, aspartate 391, and valine 392.

The protein belongs to the AgrE/ArgZ ornithine cyclodeaminase family. It depends on NAD(+) as a cofactor.

It catalyses the reaction L-ornithine = L-proline + NH4(+). In terms of biological role, catalyzes the conversion of ornithine to proline, with the release of ammonia. In Methanothermobacter thermautotrophicus (strain ATCC 29096 / DSM 1053 / JCM 10044 / NBRC 100330 / Delta H) (Methanobacterium thermoautotrophicum), this protein is Ornithine cyclodeaminase.